The primary structure comprises 442 residues: Tubulin beta chain (442 aa).

GTP-binding residues include Gln-11, Glu-69, Ser-138, Gly-142, Thr-143, Gly-144, Asn-204, and Asn-226. Glu-69 contacts Mg(2+). The interval 421–442 (EYQQYQDATAEDEEEMDEEQME) is disordered. Acidic residues predominate over residues 429–442 (TAEDEEEMDEEQME).

Belongs to the tubulin family. Dimer of alpha and beta chains. A typical microtubule is a hollow water-filled tube with an outer diameter of 25 nm and an inner diameter of 15 nM. Alpha-beta heterodimers associate head-to-tail to form protofilaments running lengthwise along the microtubule wall with the beta-tubulin subunit facing the microtubule plus end conferring a structural polarity. Microtubules usually have 13 protofilaments but different protofilament numbers can be found in some organisms and specialized cells. Mg(2+) is required as a cofactor.

The protein localises to the cytoplasm. It is found in the cytoskeleton. In terms of biological role, tubulin is the major constituent of microtubules, a cylinder consisting of laterally associated linear protofilaments composed of alpha- and beta-tubulin heterodimers. Microtubules grow by the addition of GTP-tubulin dimers to the microtubule end, where a stabilizing cap forms. Below the cap, tubulin dimers are in GDP-bound state, owing to GTPase activity of alpha-tubulin. This is Tubulin beta chain (TUBB1) from Stylonychia lemnae (Ciliate).